Reading from the N-terminus, the 487-residue chain is NADH-quinone oxidoreductase subunit N (487 aa).

A run of 13 helical transmembrane segments spans residues 7–27 (ILGP…LLMV), 38–58 (LVGL…GLGA), 79–99 (YAKA…MVWL), 111–131 (ILVL…DLIA), 164–184 (FVLG…VYGF), 207–227 (LLIG…AVPF), 238–258 (APTP…LTLF), 276–296 (VIIL…IVQT), 301–321 (LMAY…AAGT), 328–348 (VLVY…VILA), 373–393 (AAAM…AGFF), 406–426 (GLFA…FYYL), and 451–471 (VILI…SVVV).

Belongs to the complex I subunit 2 family. As to quaternary structure, NDH-1 is composed of 14 different subunits. Subunits NuoA, H, J, K, L, M, N constitute the membrane sector of the complex.

It localises to the cell inner membrane. The catalysed reaction is a quinone + NADH + 5 H(+)(in) = a quinol + NAD(+) + 4 H(+)(out). In terms of biological role, NDH-1 shuttles electrons from NADH, via FMN and iron-sulfur (Fe-S) centers, to quinones in the respiratory chain. The immediate electron acceptor for the enzyme in this species is believed to be ubiquinone. Couples the redox reaction to proton translocation (for every two electrons transferred, four hydrogen ions are translocated across the cytoplasmic membrane), and thus conserves the redox energy in a proton gradient. This is NADH-quinone oxidoreductase subunit N from Rhodospirillum rubrum (strain ATCC 11170 / ATH 1.1.1 / DSM 467 / LMG 4362 / NCIMB 8255 / S1).